A 183-amino-acid chain; its full sequence is Inner membrane-spanning protein YciB (183 aa).

The next 5 membrane-spanning stretches (helical) occupy residues 22–44 (IYTATGALVVVTGLQLIYSWVRY), 54–74 (TFLLVGFFGGLTVFFHDDAFI), 76–96 (WKVTVINILFALGLLISRYGF), 119–139 (VNLAWVGFFTVCGLLNLYVAF), and 149–169 (FKVFGLLGMTLVFTLLSGVYL).

The protein belongs to the YciB family.

The protein resides in the cell inner membrane. Functionally, plays a role in cell envelope biogenesis, maintenance of cell envelope integrity and membrane homeostasis. This chain is Inner membrane-spanning protein YciB, found in Aeromonas salmonicida (strain A449).